The chain runs to 214 residues: Glucose-6-phosphate isomerase (214 aa).

The Fe cation site is built by H92, H94, E101, and H140.

The protein belongs to the archaeal-type GPI family. As to quaternary structure, homodimer.

It localises to the cytoplasm. It carries out the reaction alpha-D-glucose 6-phosphate = beta-D-fructose 6-phosphate. The protein operates within carbohydrate degradation; glycolysis; D-glyceraldehyde 3-phosphate and glycerone phosphate from D-glucose: step 2/4. This Sinorhizobium medicae (strain WSM419) (Ensifer medicae) protein is Glucose-6-phosphate isomerase.